Here is a 460-residue protein sequence, read N- to C-terminus: Pyruvate dehydrogenase E1 component subunit beta (460 aa).

The Lipoyl-binding domain occupies Pro-2–Leu-78. Position 43 is an N6-lipoyllysine (Lys-43). A disordered region spans residues Lys-91–Ala-131. The span at Pro-100–Ala-121 shows a compositional bias: low complexity. A thiamine diphosphate-binding site is contributed by Glu-194.

In terms of assembly, heterodimer of an alpha and a beta chain. It depends on (R)-lipoate as a cofactor. Thiamine diphosphate is required as a cofactor.

It catalyses the reaction N(6)-[(R)-lipoyl]-L-lysyl-[protein] + pyruvate + H(+) = N(6)-[(R)-S(8)-acetyldihydrolipoyl]-L-lysyl-[protein] + CO2. The pyruvate dehydrogenase complex catalyzes the overall conversion of pyruvate to acetyl-CoA and CO(2). It contains multiple copies of three enzymatic components: pyruvate dehydrogenase (E1), dihydrolipoamide acetyltransferase (E2) and lipoamide dehydrogenase (E3). This is Pyruvate dehydrogenase E1 component subunit beta (pdhB) from Rhizobium meliloti (strain 1021) (Ensifer meliloti).